The following is a 350-amino-acid chain: uncharacterized protein (350 aa).

Positions Lys197 to Ser212 are enriched in basic and acidic residues. A disordered region spans residues Lys197–Val217.

Its subcellular location is the plastid. The protein resides in the chloroplast. This is an uncharacterized protein from Euglena gracilis.